Here is a 596-residue protein sequence, read N- to C-terminus: Potassium-transporting ATPase potassium-binding subunit (596 aa).

10 consecutive transmembrane segments (helical) span residues 6–26 (ILTI…LGGF), 67–87 (AIGL…LQLF), 136–156 (GLTT…IALI), 177–197 (ITLY…VGQG), 283–303 (LSNF…CFTF), 314–334 (WVVL…AVHF), 413–433 (GLYG…LMIG), 450–470 (MVAI…AIAV), 518–538 (MLAI…LALA), and 560–580 (LFIV…YVPA).

Belongs to the KdpA family. As to quaternary structure, the system is composed of three essential subunits: KdpA, KdpB and KdpC.

The protein resides in the cell inner membrane. In terms of biological role, part of the high-affinity ATP-driven potassium transport (or Kdp) system, which catalyzes the hydrolysis of ATP coupled with the electrogenic transport of potassium into the cytoplasm. This subunit binds the periplasmic potassium ions and delivers the ions to the membrane domain of KdpB through an intramembrane tunnel. In Polynucleobacter asymbioticus (strain DSM 18221 / CIP 109841 / QLW-P1DMWA-1) (Polynucleobacter necessarius subsp. asymbioticus), this protein is Potassium-transporting ATPase potassium-binding subunit.